The sequence spans 357 residues: tRNA-specific 2-thiouridylase MnmA (357 aa).

ATP contacts are provided by residues 6–13 (AMSGGVDS) and L32. The active-site Nucleophile is C101. The cysteines at positions 101 and 193 are disulfide-linked. G125 lines the ATP pocket. The interval 143–145 (KDQ) is interaction with tRNA. C193 functions as the Cysteine persulfide intermediate in the catalytic mechanism.

It belongs to the MnmA/TRMU family.

Its subcellular location is the cytoplasm. The catalysed reaction is S-sulfanyl-L-cysteinyl-[protein] + uridine(34) in tRNA + AH2 + ATP = 2-thiouridine(34) in tRNA + L-cysteinyl-[protein] + A + AMP + diphosphate + H(+). Functionally, catalyzes the 2-thiolation of uridine at the wobble position (U34) of tRNA, leading to the formation of s(2)U34. In Mycolicibacterium vanbaalenii (strain DSM 7251 / JCM 13017 / BCRC 16820 / KCTC 9966 / NRRL B-24157 / PYR-1) (Mycobacterium vanbaalenii), this protein is tRNA-specific 2-thiouridylase MnmA.